The primary structure comprises 285 residues: Transmembrane protein 53-A (285 aa).

Residues 165–185 (FLALAAFAILVIILRILLYPL) form a helical membrane-spanning segment.

Belongs to the TMEM53 family.

It is found in the nucleus outer membrane. Its function is as follows. Ensures normal bone formation, through the negative regulation of bone morphogenetic protein (BMP) signaling in osteoblast lineage cells by blocking cytoplasm-nucleus translocation of phosphorylated SMAD proteins. The sequence is that of Transmembrane protein 53-A (tmem53-a) from Xenopus laevis (African clawed frog).